The chain runs to 150 residues: Early 4 ORF6/7 control protein (150 aa).

The segment at 1–31 (MTTSGVPFGMTLRPTRSRLSRRTPYSRDRLP) is disordered. A Nuclear localization signal motif is present at residues 1 to 58 (MTTSGVPFGMTLRPTRSRLSRRTPYSRDRLPPFETETRATILEDHPLLPECNTLTMHN).

It belongs to the adenoviridae E4-orf6/7 family. Interacts with host E2F proteins.

It is found in the host nucleus. Functionally, modulates viral and host transcriptional activity to promote viral genome replication. Stimulates viral E2a promoter activity by binding and inducing dimerization of host E2F. During viral infection E1A protein binds to cellular retinablastoma (RB) family members and dissociates these repressors from a complex with E2F proteins. Free E2F is then bound to E4orf6/7 which leads to transactivation of viral E2 promoter, and cellular promoters such as E2F-1 promoter. Activation of cellular E2F targets promote cell cycle S phase and thereby possibly favorises viral DNA replication process. This Human adenovirus C serotype 2 (HAdV-2) protein is Early 4 ORF6/7 control protein.